The primary structure comprises 240 residues: 4-hydroxy-tetrahydrodipicolinate reductase (240 aa).

Residues 79–81 and 103–106 each bind NAD(+); these read ATT and SANM. The active-site Proton donor/acceptor is His135. Residue His136 participates in (S)-2,3,4,5-tetrahydrodipicolinate binding. The Proton donor role is filled by Lys139. (S)-2,3,4,5-tetrahydrodipicolinate is bound at residue 145–146; it reads GT.

The protein belongs to the DapB family.

The protein resides in the cytoplasm. The catalysed reaction is (S)-2,3,4,5-tetrahydrodipicolinate + NAD(+) + H2O = (2S,4S)-4-hydroxy-2,3,4,5-tetrahydrodipicolinate + NADH + H(+). It carries out the reaction (S)-2,3,4,5-tetrahydrodipicolinate + NADP(+) + H2O = (2S,4S)-4-hydroxy-2,3,4,5-tetrahydrodipicolinate + NADPH + H(+). It functions in the pathway amino-acid biosynthesis; L-lysine biosynthesis via DAP pathway; (S)-tetrahydrodipicolinate from L-aspartate: step 4/4. Its function is as follows. Catalyzes the conversion of 4-hydroxy-tetrahydrodipicolinate (HTPA) to tetrahydrodipicolinate. The chain is 4-hydroxy-tetrahydrodipicolinate reductase from Staphylococcus aureus (strain bovine RF122 / ET3-1).